A 181-amino-acid polypeptide reads, in one-letter code: GATA zinc finger domain-containing protein 22 (181 aa).

The GATA-type zinc-finger motif lies at 118 to 145; sequence CQICLTNNTPYWRWSVIENNKIRVCNRC.

The protein is GATA zinc finger domain-containing protein 22 (gtaV) of Dictyostelium discoideum (Social amoeba).